The chain runs to 355 residues: MANAKETTFYITISVVAFVIGKIVIALLFYKRWKRKHTIHENGFPVKGGGKMVMFRSQLLNSVSSDMFMKKTHKLSNKDILGSGGFGTVYRLVIDDSTTFAVKRLNRGTSERDRGFHRELEAMADIKHRNIVTLHGYFTSPHYNLLIYELMPNGSLDSFLHGRKALDWASRYRIAVGAARGISYLHHDCIPHIIHRDIKSSNILLDHNMEARVSDFGLATLMEPDKTHVSTFVAGTFGYLAPEYFDTGKATMKGDVYSFGVVLLELLTGRKPTDDEFFEEGTKLVTWVKGVVRDQREEVVIDNRLRGSSVQENEEMNDVFGIAMMCLEPEPAIRPAMTEVVKLLEYIKLSTRSSF.

Topologically, residues M1–T8 are extracellular. The helical transmembrane segment at F9–F29 threads the bilayer. The Cytoplasmic segment spans residues Y30–F355. In terms of domain architecture, Protein kinase spans L75–I347. ATP contacts are provided by residues L81–V89 and K103. Y148 carries the post-translational modification Phosphotyrosine. D197 functions as the Proton acceptor in the catalytic mechanism. S201 and S230 each carry phosphoserine. Residues T231 and T236 each carry the phosphothreonine modification. Y244 bears the Phosphotyrosine mark.

This sequence belongs to the protein kinase superfamily. Ser/Thr protein kinase family.

Its subcellular location is the cell membrane. The enzyme catalyses L-seryl-[protein] + ATP = O-phospho-L-seryl-[protein] + ADP + H(+). It catalyses the reaction L-threonyl-[protein] + ATP = O-phospho-L-threonyl-[protein] + ADP + H(+). This Arabidopsis thaliana (Mouse-ear cress) protein is Receptor-like serine/threonine-protein kinase At1g78530.